A 416-amino-acid chain; its full sequence is MLKRDMNIADYDADLFAAIQEETVRQEEHIELIASENYTSPRVMEAQGSQLTNKYAEGYPGKRYYGGCEYVDKVETLAIERACELFGAEYANVQPHSGSQANNAVYMALLNAGDTVLGMSLAHGGHLTHGSPVNFSGKLYNIIPYGIDENGQIDYEEMEALAVEHKPKMIIGGFSAYSQVCDWARMREIADKVGAYFFVDMAHVAGLIAAGVYPNPVPHAHVVTTTTHKTLAGPRGGLILSNEGEDLYKKLNSAVFPGGQGGPLMHVIAGKAVAFKEALEPEFKEYQARVVANAKAMVAEFLARGYNIVSGSTENHLFLVDLIDKDITGKEADAALGSANITVNKNSVPNDPRSPFVTSGIRIGSPSITRRGFTEEDAKNLAGWMCDILDNMGDESVIEATKAKVLEICKRLPVYA.

(6S)-5,6,7,8-tetrahydrofolate is bound by residues L121 and 125–127; that span reads GHL. The residue at position 229 (K229) is an N6-(pyridoxal phosphate)lysine. (6S)-5,6,7,8-tetrahydrofolate-binding positions include E245 and 354–356; that span reads SPF.

It belongs to the SHMT family. Homodimer. The cofactor is pyridoxal 5'-phosphate.

Its subcellular location is the cytoplasm. It catalyses the reaction (6R)-5,10-methylene-5,6,7,8-tetrahydrofolate + glycine + H2O = (6S)-5,6,7,8-tetrahydrofolate + L-serine. Its pathway is one-carbon metabolism; tetrahydrofolate interconversion. It participates in amino-acid biosynthesis; glycine biosynthesis; glycine from L-serine: step 1/1. In terms of biological role, catalyzes the reversible interconversion of serine and glycine with tetrahydrofolate (THF) serving as the one-carbon carrier. This reaction serves as the major source of one-carbon groups required for the biosynthesis of purines, thymidylate, methionine, and other important biomolecules. Also exhibits THF-independent aldolase activity toward beta-hydroxyamino acids, producing glycine and aldehydes, via a retro-aldol mechanism. The sequence is that of Serine hydroxymethyltransferase from Aliivibrio fischeri (strain ATCC 700601 / ES114) (Vibrio fischeri).